A 235-amino-acid polypeptide reads, in one-letter code: TVP38/TMEM64 family inner membrane protein YdjZ (235 aa).

Residues 1-13 are Periplasmic-facing; that stretch reads MMMMQSRKIWYYR. Residues 14–34 traverse the membrane as a helical segment; sequence ITLIILLFAMLLAWALLPGVH. Residues 35–64 are Cytoplasmic-facing; the sequence is EFINRSVAAFAAVDQQGIERFIQSYGALAA. The chain crosses the membrane as a helical span at residues 65 to 85; that stretch reads VVSFLLMILQAIAAPLPAFLI. At 86–95 the chain is on the periplasmic side; that stretch reads TFANASLFGA. The interval 90–199 is VTT domain; sequence ASLFGAFWGG…IVYSWAGSML (110 aa). The helical transmembrane segment at 96–116 threads the bilayer; the sequence is FWGGLLSWTSSMAGAALCFFI. The Cytoplasmic segment spans residues 117–176; it reads ARVMGREVVEKLTGKTVLDSMDGFFTRYGKHTILVCRLLPFVPFDPISYAAGLTSIRFRS. A helical membrane pass occupies residues 177–197; the sequence is FFIATGLGQLPATIVYSWAGS. Over 198–202 the chain is Periplasmic; that stretch reads MLTGG. Residues 203–223 traverse the membrane as a helical segment; it reads TFWFVTGLFILFALTVVIFMA. Residues 224 to 235 lie on the Cytoplasmic side of the membrane; sequence KKIWLERQKRNA.

It belongs to the TVP38/TMEM64 family.

The protein localises to the cell inner membrane. The protein is TVP38/TMEM64 family inner membrane protein YdjZ (ydjZ) of Escherichia coli (strain K12).